Here is a 706-residue protein sequence, read N- to C-terminus: Triadin (706 aa).

A disordered region spans residues 1–28 (MTEITAEGNASTTTTVIDSKNGSVPKSP). At 1-47 (MTEITAEGNASTTTTVIDSKNGSVPKSPGKVLKRTVTEDLVTTFSSP) the chain is on the cytoplasmic side. Polar residues predominate over residues 8 to 24 (GNASTTTTVIDSKNGSV). A helical membrane pass occupies residues 48–68 (AAWLLVIALIITWSAVAVVMF). Residues 69–706 (DLVDYKNFSA…GKPNSPGPKQ (638 aa)) are Lumenal-facing. Asn-75 carries N-linked (GlcNAc...) asparagine glycosylation. Residues 117–127 (DGDEEDDEGDE) show a composition bias toward acidic residues. Disordered stretches follow at residues 117-265 (DGDE…EQKD), 281-663 (DLKP…KKQK), and 684-706 (FPVT…GPKQ). Composition is skewed to basic and acidic residues over residues 128-254 (DTAK…ESKE), 309-358 (PEEK…KSPD), 372-432 (TKKD…KEEV), 443-518 (AKKE…EVKP), 525-552 (IKKE…EKVL), 570-588 (KKAE…DKPK), and 599-621 (ESGK…RESH). Asn-625 carries an N-linked (GlcNAc...) asparagine glycan. Positions 628–651 (KAEKPARGSKEGFEDVPASKKAKE) are enriched in basic and acidic residues.

As to quaternary structure, interacts with CASQ2. Homooligomer of variable subunit number; disulfide-linked. Interacts with CASQ1 and RYR1 in skeletal muscle. Post-translationally, phosphorylated by CaMK2. In terms of processing, N-glycosylated. As to expression, detected in skeletal muscle and in heart (at protein level). Detected in skeletal muscle and in heart.

The protein resides in the sarcoplasmic reticulum membrane. Its function is as follows. Contributes to the regulation of lumenal Ca2+ release via the sarcoplasmic reticulum calcium release channels RYR1 and RYR2, a key step in triggering skeletal and heart muscle contraction. Required for normal organization of the triad junction, where T-tubules and the sarcoplasmic reticulum terminal cisternae are in close contact. Required for normal skeletal muscle strength. Plays a role in excitation-contraction coupling in the heart and in regulating the rate of heart beats. The chain is Triadin (TRDN) from Oryctolagus cuniculus (Rabbit).